The sequence spans 551 residues: Terpene synthase 10 (551 aa).

D303, D307, and E455 together coordinate Mg(2+). The DDXXD motif motif lies at D303 to D307.

The protein belongs to the terpene synthase family. Requires Mg(2+) as cofactor.

Catalyzes the cyclization of farnesyl diphosphate to sesquiterpene olefins. In Ricinus communis (Castor bean), this protein is Terpene synthase 10 (TPS10).